The sequence spans 483 residues: ATP-dependent RNA helicase DDX25 (483 aa).

Positions 61 to 74 match the Nuclear export signal motif; it reads LAANSLLNKLIHQS. The short motif at 97 to 125 is the Q motif element; that stretch reads KTFEELRLKEELLKGIYAMGFNRPSKIQE. Positions 100–114 match the Nuclear localization signal motif; that stretch reads EELRLKEELLKGIYA. A Helicase ATP-binding domain is found at 130-300; sequence MMLAHPPQNL…ERIIPDPNVI (171 aa). 143–150 contacts ATP; it reads SQSGTGKT. The DEAD box motif lies at 247-250; sequence DEAD. The Helicase C-terminal domain maps to 311–478; the sequence is NIRQYYVLCE…QLNAEDMDEI (168 aa).

It belongs to the DEAD box helicase family. Phosphorylated on threonine residues. The phosphorylated form is found in the cytoplasm but not in the nucleus. As to expression, highly expressed in the Leydig and germ cells of the testis and weakly expressed in the pituitary and hypothalamus.

It is found in the cytoplasm. It localises to the nucleus. It catalyses the reaction ATP + H2O = ADP + phosphate + H(+). Its function is as follows. ATP-dependent RNA helicase. Required for mRNA export and translation regulation during spermatid development. This chain is ATP-dependent RNA helicase DDX25 (DDX25), found in Homo sapiens (Human).